The chain runs to 246 residues: Adenosine 5'-phosphosulfate reductase (246 aa).

Residues C131, C132, C214, and C217 each contribute to the [4Fe-4S] cluster site. The active-site Nucleophile; cysteine thiosulfonate intermediate is C242.

It belongs to the PAPS reductase family. CysH subfamily. Requires [4Fe-4S] cluster as cofactor.

It localises to the cytoplasm. It carries out the reaction [thioredoxin]-disulfide + sulfite + AMP + 2 H(+) = adenosine 5'-phosphosulfate + [thioredoxin]-dithiol. The protein operates within sulfur metabolism; hydrogen sulfide biosynthesis; sulfite from sulfate. Its function is as follows. Catalyzes the formation of sulfite from adenosine 5'-phosphosulfate (APS) using thioredoxin as an electron donor. This is Adenosine 5'-phosphosulfate reductase from Neisseria meningitidis serogroup B (strain ATCC BAA-335 / MC58).